Consider the following 866-residue polypeptide: N-alpha-acetyltransferase 15, NatA auxiliary subunit (866 aa).

TPR repeat units lie at residues 46–79, 80–113, 148–184, and 224–257; these read GETL…DLKS, HVCW…DKDN, RASW…SPDK, and LAVE…NPEN. N6-acetyllysine is present on Lys-262. Ser-302 carries the post-translational modification Phosphoserine. TPR repeat units lie at residues 374–407, 409–441, and 485–522; these read LWVQ…TPTL, ELFL…DTAD, and MWFQ…TDDQ. Residues 500 to 866 are interaction with HYPK; that stretch reads KFGEALKKCY…AEAEELANEI (367 aa). Residues Ser-537 and Ser-588 each carry the phosphoserine modification. Basic and acidic residues predominate over residues 579–594; that stretch reads EHEADTANMSDKELKK. The tract at residues 579–642 is disordered; sequence EHEADTANMS…EEIGGPKEEL (64 aa). The span at 595–604 shows a compositional bias: basic residues; it reads LRNKQRRAQK. A compositionally biased stretch (basic and acidic residues) spans 606 to 621; it reads AQIEEEKKNAEKEKQQ. One copy of the TPR 8 repeat lies at 672–705; it reads IETHLFAFEIYFRKEKFLLMLQSVKRAFAIDSSH. Lys-735 and Lys-756 each carry N6-acetyllysine. Residues Ser-855 and Ser-856 each carry the phosphoserine modification.

In terms of assembly, component of the N-terminal acetyltransferase A (NatA) complex composed of NAA10 or probably NAA11 and NAA15. Interacts with XRCC6, NAA50 and XRCC5. Associates with HYPK when in a complex with NAA10. Interaction with HYPK reduces the capacity to interact with NAA50. Post-translationally, cleaved by caspases during apoptosis.

The protein localises to the cytoplasm. It is found in the nucleus. Functionally, auxillary subunit of the N-terminal acetyltransferase A (NatA) complex which displays alpha (N-terminal) acetyltransferase activity. The NAT activity may be important for vascular, hematopoietic and neuronal growth and development. Required to control retinal neovascularization in adult ocular endothelial cells. In complex with XRCC6 and XRCC5 (Ku80), up-regulates transcription from the osteocalcin promoter. The polypeptide is N-alpha-acetyltransferase 15, NatA auxiliary subunit (NAA15) (Pongo abelii (Sumatran orangutan)).